Reading from the N-terminus, the 877-residue chain is DNA polymerase I (877 aa).

Residues 180 to 270 form the 5'-3' exonuclease domain; that stretch reads TPAQFIDLKA…EIGLDDTLLK (91 aa). Positions 308–468 constitute a 3'-5' exonuclease domain; that stretch reads DEIDFEIVTD…AKEKMMAELL (161 aa).

Belongs to the DNA polymerase type-A family. In terms of assembly, single-chain monomer with multiple functions.

The enzyme catalyses DNA(n) + a 2'-deoxyribonucleoside 5'-triphosphate = DNA(n+1) + diphosphate. Its function is as follows. In addition to polymerase activity, this DNA polymerase exhibits 3'-5' and 5'-3' exonuclease activity. The polypeptide is DNA polymerase I (polA) (Lactococcus lactis subsp. lactis (strain IL1403) (Streptococcus lactis)).